The following is a 354-amino-acid chain: Uroporphyrinogen decarboxylase (354 aa).

Substrate-binding positions include 27–31, Asp-77, Tyr-154, Thr-209, and His-327; that span reads RQAGR.

The protein belongs to the uroporphyrinogen decarboxylase family. In terms of assembly, homodimer.

Its subcellular location is the cytoplasm. The enzyme catalyses uroporphyrinogen III + 4 H(+) = coproporphyrinogen III + 4 CO2. Its pathway is porphyrin-containing compound metabolism; protoporphyrin-IX biosynthesis; coproporphyrinogen-III from 5-aminolevulinate: step 4/4. In terms of biological role, catalyzes the decarboxylation of four acetate groups of uroporphyrinogen-III to yield coproporphyrinogen-III. This is Uroporphyrinogen decarboxylase from Salmonella heidelberg (strain SL476).